Here is a 228-residue protein sequence, read N- to C-terminus: ATP synthase subunit a (228 aa).

Transmembrane regions (helical) follow at residues 16-36, 45-65, 80-100, 106-126, 138-158, 178-198, and 201-221; these read GQEW…FIIA, LVPT…ISMG, LIGS…IPGF, NINF…YLGI, FMGP…ISHL, FLMV…FFLL, and FGVL…AGSI.

The protein belongs to the ATPase A chain family. As to quaternary structure, F-type ATPases have 2 components, CF(1) - the catalytic core - and CF(0) - the membrane proton channel. CF(1) has five subunits: alpha(3), beta(3), gamma(1), delta(1), epsilon(1). CF(0) has three main subunits: a(1), b(2) and c(9-12). The alpha and beta chains form an alternating ring which encloses part of the gamma chain. CF(1) is attached to CF(0) by a central stalk formed by the gamma and epsilon chains, while a peripheral stalk is formed by the delta and b chains.

The protein localises to the cell inner membrane. In terms of biological role, key component of the proton channel; it plays a direct role in the translocation of protons across the membrane. In Aliarcobacter butzleri (strain RM4018) (Arcobacter butzleri), this protein is ATP synthase subunit a.